Reading from the N-terminus, the 361-residue chain is Chorismate synthase (361 aa).

Residues arginine 48 and arginine 54 each contribute to the NADP(+) site. FMN contacts are provided by residues 125–127, 238–239, glycine 278, 293–297, and arginine 319; these read RSS, NA, and KPTSS.

Belongs to the chorismate synthase family. As to quaternary structure, homotetramer. FMNH2 serves as cofactor.

It carries out the reaction 5-O-(1-carboxyvinyl)-3-phosphoshikimate = chorismate + phosphate. It participates in metabolic intermediate biosynthesis; chorismate biosynthesis; chorismate from D-erythrose 4-phosphate and phosphoenolpyruvate: step 7/7. In terms of biological role, catalyzes the anti-1,4-elimination of the C-3 phosphate and the C-6 proR hydrogen from 5-enolpyruvylshikimate-3-phosphate (EPSP) to yield chorismate, which is the branch point compound that serves as the starting substrate for the three terminal pathways of aromatic amino acid biosynthesis. This reaction introduces a second double bond into the aromatic ring system. The polypeptide is Chorismate synthase (Klebsiella pneumoniae subsp. pneumoniae (strain ATCC 700721 / MGH 78578)).